A 691-amino-acid polypeptide reads, in one-letter code: Elongation factor G (691 aa).

One can recognise a tr-type G domain in the interval 12-286 (KKLRNIGIMA…GILEYLPSPL (275 aa)). GTP-binding positions include 21 to 28 (AHIDAGKT), 85 to 89 (DTPGH), and 139 to 142 (NKMD).

It belongs to the TRAFAC class translation factor GTPase superfamily. Classic translation factor GTPase family. EF-G/EF-2 subfamily.

The protein resides in the cytoplasm. Its function is as follows. Catalyzes the GTP-dependent ribosomal translocation step during translation elongation. During this step, the ribosome changes from the pre-translocational (PRE) to the post-translocational (POST) state as the newly formed A-site-bound peptidyl-tRNA and P-site-bound deacylated tRNA move to the P and E sites, respectively. Catalyzes the coordinated movement of the two tRNA molecules, the mRNA and conformational changes in the ribosome. This is Elongation factor G from Thermosipho africanus (strain TCF52B).